Consider the following 43-residue polypeptide: Iota-conotoxin-like S11.2 (43 aa).

4 cysteine pairs are disulfide-bonded: Cys2–Cys16, Cys9–Cys19, Cys15–Cys24, and Cys18–Cys35. A D-methionine modification is found at Met41. Arg43 is a propeptide (removed by a carboxypeptidase).

This sequence belongs to the conotoxin I1 superfamily. In terms of tissue distribution, expressed by the venom duct.

It is found in the secreted. Functionally, iota-conotoxins bind to voltage-gated sodium channels (Nav) and act as agonists by shifting the voltage-dependence of activation to more hyperpolarized levels. Produces general excitatory symptoms. This chain is Iota-conotoxin-like S11.2, found in Conus striatus (Striated cone).